A 480-amino-acid polypeptide reads, in one-letter code: UDP-glycosyltransferase 71C5 (480 aa).

Residues serine 290, 349–351 (APQ), 366–374 (HCGWNSVQE), and 388–391 (YAEQ) contribute to the UDP-alpha-D-glucose site.

Belongs to the UDP-glycosyltransferase family.

Its function is as follows. Possesses low quercetin 3-O-glucosyltransferase activity in vitro. The sequence is that of UDP-glycosyltransferase 71C5 (UGT71C5) from Arabidopsis thaliana (Mouse-ear cress).